We begin with the raw amino-acid sequence, 341 residues long: Ribosomal RNA small subunit methyltransferase H (341 aa).

Residues 47–49, Asp-64, Phe-91, Asp-109, and Gln-116 contribute to the S-adenosyl-L-methionine site; that span reads GGY.

Belongs to the methyltransferase superfamily. RsmH family.

The protein resides in the cytoplasm. The enzyme catalyses cytidine(1402) in 16S rRNA + S-adenosyl-L-methionine = N(4)-methylcytidine(1402) in 16S rRNA + S-adenosyl-L-homocysteine + H(+). Functionally, specifically methylates the N4 position of cytidine in position 1402 (C1402) of 16S rRNA. The polypeptide is Ribosomal RNA small subunit methyltransferase H (Rhizobium leguminosarum bv. trifolii (strain WSM1325)).